We begin with the raw amino-acid sequence, 213 residues long: Protein-L-isoaspartate O-methyltransferase (213 aa).

The active site involves serine 58.

The protein belongs to the methyltransferase superfamily. L-isoaspartyl/D-aspartyl protein methyltransferase family.

The protein resides in the cytoplasm. The catalysed reaction is [protein]-L-isoaspartate + S-adenosyl-L-methionine = [protein]-L-isoaspartate alpha-methyl ester + S-adenosyl-L-homocysteine. Functionally, catalyzes the methyl esterification of L-isoaspartyl residues in peptides and proteins that result from spontaneous decomposition of normal L-aspartyl and L-asparaginyl residues. It plays a role in the repair and/or degradation of damaged proteins. The polypeptide is Protein-L-isoaspartate O-methyltransferase (Chlorobaculum tepidum (strain ATCC 49652 / DSM 12025 / NBRC 103806 / TLS) (Chlorobium tepidum)).